A 240-amino-acid chain; its full sequence is 2-C-methyl-D-erythritol 2,4-cyclodiphosphate synthase, apicoplast (240 aa).

The a divalent metal cation site is built by Asp71 and His73. Residues 71-73 (DIH) and 115-116 (HS) each bind 4-CDP-2-C-methyl-D-erythritol 2-phosphate. His123 is a binding site for a divalent metal cation. 4-CDP-2-C-methyl-D-erythritol 2-phosphate contacts are provided by residues 137–139 (DIG), 142–146 (FPDKD), 181–187 (AQVPKIS), and 212–214 (GKT).

This sequence belongs to the IspF family. As to quaternary structure, homotrimer. The cofactor is a divalent metal cation.

The protein localises to the plastid. Its subcellular location is the apicoplast. It carries out the reaction 4-CDP-2-C-methyl-D-erythritol 2-phosphate = 2-C-methyl-D-erythritol 2,4-cyclic diphosphate + CMP. It functions in the pathway isoprenoid biosynthesis; isopentenyl diphosphate biosynthesis via DXP pathway; isopentenyl diphosphate from 1-deoxy-D-xylulose 5-phosphate: step 4/6. Functionally, in the mevalonate-independent isoprenoid biosynthetic pathway, converts 4-diphosphocytidyl-2C-methyl-D-erythritol 2-phosphate into 2C-methyl-D-erythritol 2,4-cyclodiphosphate and CMP. The polypeptide is 2-C-methyl-D-erythritol 2,4-cyclodiphosphate synthase, apicoplast (Plasmodium falciparum (isolate 3D7)).